We begin with the raw amino-acid sequence, 408 residues long: Secreted effector protein SseJ (408 aa).

The active-site Nucleophile is S151. Active-site residues include D381 and H384.

The protein belongs to the 'GDSL' lipolytic enzyme family. Interacts with RhoA and indirectly with SifA.

It localises to the secreted. It is found in the host cytoplasm. Its function is as follows. Effector proteins function to alter host cell physiology and promote bacterial survival in host tissues. This protein is required for endosomal tubulation and negatively regulates the formation of Salmonella-induced filaments (Sifs) in epithelial cells. Has both deacylase and esterification activities in vitro, but esterification is probably the dominant activity in host cells. Significantly contributes to cholesterol esterification, which reduces cellular cholesterol in cells and abrogates the ability of SifA to associate with cholesterol and LAMP-1 vesicles. The protein is Secreted effector protein SseJ (sseJ) of Salmonella typhimurium (strain LT2 / SGSC1412 / ATCC 700720).